The primary structure comprises 139 residues: S-adenosylmethionine decarboxylase proenzyme (139 aa).

Ser63 functions as the Schiff-base intermediate with substrate; via pyruvic acid in the catalytic mechanism. Ser63 is subject to Pyruvic acid (Ser); by autocatalysis. Catalysis depends on His68, which acts as the Proton acceptor; for processing activity. The Proton donor; for catalytic activity role is filled by Cys83.

This sequence belongs to the prokaryotic AdoMetDC family. Type 1 subfamily. As to quaternary structure, heterotetramer of two alpha and two beta chains arranged as a dimer of alpha/beta heterodimers. Requires pyruvate as cofactor. Post-translationally, is synthesized initially as an inactive proenzyme. Formation of the active enzyme involves a self-maturation process in which the active site pyruvoyl group is generated from an internal serine residue via an autocatalytic post-translational modification. Two non-identical subunits are generated from the proenzyme in this reaction, and the pyruvate is formed at the N-terminus of the alpha chain, which is derived from the carboxyl end of the proenzyme. The post-translation cleavage follows an unusual pathway, termed non-hydrolytic serinolysis, in which the side chain hydroxyl group of the serine supplies its oxygen atom to form the C-terminus of the beta chain, while the remainder of the serine residue undergoes an oxidative deamination to produce ammonia and the pyruvoyl group blocking the N-terminus of the alpha chain.

It carries out the reaction S-adenosyl-L-methionine + H(+) = S-adenosyl 3-(methylsulfanyl)propylamine + CO2. It participates in amine and polyamine biosynthesis; S-adenosylmethioninamine biosynthesis; S-adenosylmethioninamine from S-adenosyl-L-methionine: step 1/1. Its function is as follows. Catalyzes the decarboxylation of S-adenosylmethionine to S-adenosylmethioninamine (dcAdoMet), the propylamine donor required for the synthesis of the polyamines spermine and spermidine from the diamine putrescine. The polypeptide is S-adenosylmethionine decarboxylase proenzyme (Pyrococcus abyssi (strain GE5 / Orsay)).